We begin with the raw amino-acid sequence, 140 residues long: Protein ripply1 (140 aa).

Positions 28–31 match the WRPW motif; required for gro2-binding motif; sequence WRPW. Positions 71–106 are ripply homology domain; sequence HPVRLYWPRSKSFDYLFSDGEALLRNFPVQATINFY. Residues 107–126 form a disordered region; the sequence is DESDSEDEEESCDEDDESDV.

The protein belongs to the ripply family. In terms of assembly, interacts with gro2 via the WRPW motif. As to expression, expressed in the embryonic anterior presomitic mesoderm and in newly formed somites.

It localises to the nucleus. In terms of biological role, plays a role in somitogenesis. Essential for transcriptional repression of the segmental patterning genes, thus terminating the segmentation program in the presomitic mesoderm, and also required for the maintenance of rostrocaudal polarity in somites. In Danio rerio (Zebrafish), this protein is Protein ripply1.